Consider the following 502-residue polypeptide: Arginine decarboxylase (502 aa).

N6-(pyridoxal phosphate)lysine is present on lysine 42. Position 226–236 (226–236) interacts with substrate; the sequence is IDIGGGLGIDY.

This sequence belongs to the Orn/Lys/Arg decarboxylase class-II family. SpeA subfamily. The cofactor is pyridoxal 5'-phosphate. It depends on Mg(2+) as a cofactor.

The catalysed reaction is L-arginine + H(+) = agmatine + CO2. It functions in the pathway amine and polyamine biosynthesis; agmatine biosynthesis; agmatine from L-arginine: step 1/1. The chain is Arginine decarboxylase from Solanum lycopersicum (Tomato).